A 711-amino-acid chain; its full sequence is Ribosomal RNA large subunit methyltransferase K/L (711 aa).

The THUMP domain maps to 42 to 153 (DAQRAVLWSR…KGRATISVDL (112 aa)).

The protein belongs to the methyltransferase superfamily. RlmKL family.

The protein localises to the cytoplasm. It carries out the reaction guanosine(2445) in 23S rRNA + S-adenosyl-L-methionine = N(2)-methylguanosine(2445) in 23S rRNA + S-adenosyl-L-homocysteine + H(+). The enzyme catalyses guanosine(2069) in 23S rRNA + S-adenosyl-L-methionine = N(2)-methylguanosine(2069) in 23S rRNA + S-adenosyl-L-homocysteine + H(+). In terms of biological role, specifically methylates the guanine in position 2445 (m2G2445) and the guanine in position 2069 (m7G2069) of 23S rRNA. This chain is Ribosomal RNA large subunit methyltransferase K/L, found in Xanthomonas oryzae pv. oryzae (strain MAFF 311018).